The sequence spans 577 residues: Proline--tRNA ligase (577 aa).

It belongs to the class-II aminoacyl-tRNA synthetase family. ProS type 1 subfamily. As to quaternary structure, homodimer.

Its subcellular location is the cytoplasm. The enzyme catalyses tRNA(Pro) + L-proline + ATP = L-prolyl-tRNA(Pro) + AMP + diphosphate. Functionally, catalyzes the attachment of proline to tRNA(Pro) in a two-step reaction: proline is first activated by ATP to form Pro-AMP and then transferred to the acceptor end of tRNA(Pro). As ProRS can inadvertently accommodate and process non-cognate amino acids such as alanine and cysteine, to avoid such errors it has two additional distinct editing activities against alanine. One activity is designated as 'pretransfer' editing and involves the tRNA(Pro)-independent hydrolysis of activated Ala-AMP. The other activity is designated 'posttransfer' editing and involves deacylation of mischarged Ala-tRNA(Pro). The misacylated Cys-tRNA(Pro) is not edited by ProRS. The chain is Proline--tRNA ligase from Janthinobacterium sp. (strain Marseille) (Minibacterium massiliensis).